Here is a 345-residue protein sequence, read N- to C-terminus: UbiA prenyltransferase domain-containing protein 1 (345 aa).

8 consecutive transmembrane segments (helical) span residues 60 to 80 (LALRPWSFSASLIPVALGTAI), 90 to 110 (LLLFVVCAVAVLAVHGAGNLV), 141 to 161 (VRFGVFLYTLGCLCAACLYFI), 169 to 189 (LALIYFGGLSSSFLYTGGIGF), 213 to 233 (AVQVGYLAVTPLLYAVPLALS), 251 to 273 (QAGIVTLAILVGPMFSYMLYNLL), 285 to 305 (ATRYTISMALPLLTIPLAFSL), and 324 to 344 (LNLLVGLFYVFGIVLAPAGSL).

It belongs to the UbiA prenyltransferase family.

It is found in the endoplasmic reticulum membrane. The protein localises to the golgi apparatus membrane. The protein resides in the mitochondrion membrane. The catalysed reaction is menadiol + (2E,6E,10E)-geranylgeranyl diphosphate = menaquinol-4 + diphosphate. The enzyme catalyses all-trans-decaprenyl diphosphate + 4-hydroxybenzoate = 4-hydroxy-3-(all-trans-decaprenyl)benzoate + diphosphate. The protein operates within quinol/quinone metabolism; menaquinone biosynthesis. It functions in the pathway cofactor biosynthesis; ubiquinone biosynthesis. Functionally, prenyltransferase that mediates the formation of menaquinone-4 (MK-4) and coenzyme Q10. MK-4 is a vitamin K2 isoform required for endothelial cell development. Mediates the conversion of phylloquinone (PK) into MK-4, probably by cleaving the side chain of phylloquinone (PK) to release 2-methyl-1,4-naphthoquinone (menadione; K3) and then prenylating it with geranylgeranyl pyrophosphate (GGPP) to form MK-4. Also plays a role in cardiovascular development independently of MK-4 biosynthesis, by acting as a coenzyme Q10 biosynthetic enzyme: coenzyme Q10, also named ubiquinone, plays an important antioxidant role in the cardiovascular system. Mediates biosynthesis of coenzyme Q10 in the Golgi membrane, leading to protect cardiovascular tissues from NOS3/eNOS-dependent oxidative stress. This chain is UbiA prenyltransferase domain-containing protein 1 (ubiad1), found in Xenopus tropicalis (Western clawed frog).